The chain runs to 101 residues: Small ribosomal subunit protein uS14 (101 aa).

Belongs to the universal ribosomal protein uS14 family. Part of the 30S ribosomal subunit. Contacts proteins S3 and S10.

Its function is as follows. Binds 16S rRNA, required for the assembly of 30S particles and may also be responsible for determining the conformation of the 16S rRNA at the A site. The chain is Small ribosomal subunit protein uS14 from Nitrosomonas europaea (strain ATCC 19718 / CIP 103999 / KCTC 2705 / NBRC 14298).